Here is a 198-residue protein sequence, read N- to C-terminus: Putative pseudouridine methyltransferase (198 aa).

Residues methionine 132 and cysteine 186 each contribute to the S-adenosyl-L-methionine site.

Belongs to the methyltransferase superfamily. TrmY family.

It localises to the cytoplasm. The protein is Putative pseudouridine methyltransferase of Photobacterium profundum (strain SS9).